The following is a 412-amino-acid chain: Alanyl-tRNA editing protein Aarsd1 (412 aa).

Positions 108, 112, 208, and 212 each coordinate Zn(2+).

It belongs to the class-II aminoacyl-tRNA synthetase family. Alax-L subfamily. Requires Zn(2+) as cofactor.

It is found in the cytoplasm. Its function is as follows. Functions in trans to edit the amino acid moiety from incorrectly charged tRNA(Ala). The chain is Alanyl-tRNA editing protein Aarsd1 (aarsd1) from Danio rerio (Zebrafish).